The following is a 317-amino-acid chain: Transaldolase (317 aa).

K126 (schiff-base intermediate with substrate) is an active-site residue.

It belongs to the transaldolase family. Type 1 subfamily. As to quaternary structure, homodimer.

It is found in the cytoplasm. It catalyses the reaction D-sedoheptulose 7-phosphate + D-glyceraldehyde 3-phosphate = D-erythrose 4-phosphate + beta-D-fructose 6-phosphate. Its pathway is carbohydrate degradation; pentose phosphate pathway; D-glyceraldehyde 3-phosphate and beta-D-fructose 6-phosphate from D-ribose 5-phosphate and D-xylulose 5-phosphate (non-oxidative stage): step 2/3. Functionally, transaldolase is important for the balance of metabolites in the pentose-phosphate pathway. This Burkholderia lata (strain ATCC 17760 / DSM 23089 / LMG 22485 / NCIMB 9086 / R18194 / 383) protein is Transaldolase.